A 348-amino-acid polypeptide reads, in one-letter code: D-alanine--D-alanine ligase (348 aa).

The ATP-grasp domain occupies 132-334 (KRVLESIGIP…YPDLIEELVT (203 aa)). 162–217 (LARLTFPIFVKPANMGSSVGISKAQTKVELRKAIQLALTYDSRVLIEQGVVAREIE) serves as a coordination point for ATP. Mg(2+) contacts are provided by Asp-288, Glu-301, and Asn-303.

This sequence belongs to the D-alanine--D-alanine ligase family. It depends on Mg(2+) as a cofactor. Requires Mn(2+) as cofactor.

The protein resides in the cytoplasm. The catalysed reaction is 2 D-alanine + ATP = D-alanyl-D-alanine + ADP + phosphate + H(+). The protein operates within cell wall biogenesis; peptidoglycan biosynthesis. Its function is as follows. Cell wall formation. This chain is D-alanine--D-alanine ligase, found in Streptococcus pyogenes serotype M3 (strain SSI-1).